A 670-amino-acid polypeptide reads, in one-letter code: Leiomodin-3 (670 aa).

Disordered stretches follow at residues 34-72 (EMDDIAPDERVPVGLRQKDASHEMTVRDCTEPESEEEID), 94-120 (EIAPDERVPVGMRQRDQTDKPPTGSFD), 139-165 (EEERVPTTLLPSQKTNEEHEAKNEDKV), and 202-274 (EDKV…NWVP). Basic and acidic residues-rich tracts occupy residues 40 to 63 (PDERVPVGLRQKDASHEMTVRDCT), 97 to 112 (PDERVPVGMRQRDQTD), 153 to 163 (TNEEHEAKNED), 205 to 214 (VCDKPVKTDL), and 249 to 261 (TETKVNEEKKEDS). Positions 150-183 (SQKTNEEHEAKNEDKVEELELVYEEIVEEVEGGQ) form a coiled coil. Residues 464–494 (DRQRQQRMEEQKLQQMKEQRKVMEMYEDSLN) adopt a coiled-coil conformation. The interval 517–556 (NGAEDIPEDSPEPSPQPSPPHQLCKTQHLAPQQHPPNLST) is disordered. The WH2 domain occupies 637-656 (PRDHLLSEIRQSNVAYLKAV).

It belongs to the tropomodulin family. Expressed in muscle (at protein level).

It localises to the cytoplasm. It is found in the myofibril. The protein resides in the sarcomere. Its subcellular location is the a band. The protein localises to the m line. It localises to the cytoskeleton. Its function is as follows. Essential for the organization of sarcomeric thin filaments in skeletal muscle. The sequence is that of Leiomodin-3 from Danio rerio (Zebrafish).